The following is a 206-amino-acid chain: Glycerol-3-phosphate acyltransferase (206 aa).

A run of 6 helical transmembrane segments spans residues 4-24 (TAFAFVLAAYLIGSLSFAVIV), 53-73 (LAAALTLLGDGAKGWVAVALA), 86-106 (GIALCALAVLFGHMWPVFFGF), 116-136 (VGILFGINPWLALAALATWLF), 137-157 (MAFVVKISSLSAIVACVLAPV), and 160-180 (FFILGPHSVYFGTCIIIAIVV).

The protein belongs to the PlsY family. In terms of assembly, probably interacts with PlsX.

It localises to the cell inner membrane. It catalyses the reaction an acyl phosphate + sn-glycerol 3-phosphate = a 1-acyl-sn-glycero-3-phosphate + phosphate. It participates in lipid metabolism; phospholipid metabolism. Its function is as follows. Catalyzes the transfer of an acyl group from acyl-phosphate (acyl-PO(4)) to glycerol-3-phosphate (G3P) to form lysophosphatidic acid (LPA). This enzyme utilizes acyl-phosphate as fatty acyl donor, but not acyl-CoA or acyl-ACP. This is Glycerol-3-phosphate acyltransferase from Chromobacterium violaceum (strain ATCC 12472 / DSM 30191 / JCM 1249 / CCUG 213 / NBRC 12614 / NCIMB 9131 / NCTC 9757 / MK).